Consider the following 82-residue polypeptide: Small ribosomal subunit protein bS16 (82 aa).

This sequence belongs to the bacterial ribosomal protein bS16 family.

The chain is Small ribosomal subunit protein bS16 from Yersinia pseudotuberculosis serotype O:1b (strain IP 31758).